The primary structure comprises 342 residues: Isopentenyl-diphosphate delta-isomerase (342 aa).

11-12 provides a ligand contact to substrate; the sequence is RK. FMN-binding positions include Ser68, 69-71, Ser99, and Asn128; that span reads SMT. 99 to 101 provides a ligand contact to substrate; that stretch reads SQR. Gln162 contributes to the substrate binding site. A Mg(2+)-binding site is contributed by Glu163. FMN is bound by residues Lys194, Ser219, Thr224, 275-277, and 296-297; these read GVR and AK.

It belongs to the IPP isomerase type 2 family. Homooctamer. Dimer of tetramers. FMN is required as a cofactor. It depends on NADPH as a cofactor. The cofactor is Mg(2+).

The protein localises to the cytoplasm. It carries out the reaction isopentenyl diphosphate = dimethylallyl diphosphate. In terms of biological role, involved in the biosynthesis of isoprenoids. Catalyzes the 1,3-allylic rearrangement of the homoallylic substrate isopentenyl (IPP) to its allylic isomer, dimethylallyl diphosphate (DMAPP). The protein is Isopentenyl-diphosphate delta-isomerase of Legionella pneumophila (strain Lens).